Here is a 425-residue protein sequence, read N- to C-terminus: UPF0761 membrane protein PXO_04555 (425 aa).

The next 6 membrane-spanning stretches (helical) occupy residues 48–68, 105–125, 154–174, 182–202, 219–239, and 250–270; these read VFAL…FPAF, FTVA…HSIE, GTML…LPLF, LAEF…IVLI, GALL…VYLG, and ALSA…SVLL.

The protein belongs to the UPF0761 family.

The protein localises to the cell inner membrane. The chain is UPF0761 membrane protein PXO_04555 from Xanthomonas oryzae pv. oryzae (strain PXO99A).